Reading from the N-terminus, the 317-residue chain is ADIPOR-like receptor IZH1 (317 aa).

The Lumenal segment spans residues 1 to 80 (MSEERGMKEQ…FNNESINIYT (80 aa)). An N-linked (GlcNAc...) asparagine glycan is attached at Asn73. Residues 81-101 (HLIPGVAYLVLFLIFADLVLA) form a helical membrane-spanning segment. Residues 102–113 (QLLPGLDAGEHR) lie on the Cytoplasmic side of the membrane. A helical membrane pass occupies residues 114 to 136 (MLRFYLLGAFTCLACSSCFHCLK). The Lumenal segment spans residues 137 to 148 (QHSEPHSRLWSK). A helical transmembrane segment spans residues 149–169 (VDYLGILAQITCSTISLLYYG). At 170–175 (YHSYPS) the chain is on the cytoplasmic side. Residues 176 to 196 (HFVFFSTLTVALCSACAVLVL) form a helical membrane-spanning segment. Asn197 is a glycosylation site (N-linked (GlcNAc...) asparagine). Residues 197 to 210 (NDSFNTVAFRPLRA) are Lumenal-facing. Residues 211-231 (FLFMAFGLSGVIPVLAGSYQF) traverse the membrane as a helical segment. Topologically, residues 232–243 (GFAEWAARIQLK) are cytoplasmic. The helical transmembrane segment at 244 to 264 (YVLYEAVFYITGALVYGFRIP) threads the bilayer. The Lumenal segment spans residues 265–283 (ERFAPGKFDMVGHSHQIFH). Residues 284-304 (LLVVLGTLCHFRAVTGSYIFI) traverse the membrane as a helical segment. At 305–317 (CTGKHYSSLLMFI) the chain is on the cytoplasmic side.

This sequence belongs to the ADIPOR family.

It is found in the endoplasmic reticulum membrane. Functionally, ADIPOR-like receptor involved in zinc metabolism either by altering membrane sterol content or by directly altering cellular zinc levels. The sequence is that of ADIPOR-like receptor IZH1 (IZH1) from Eremothecium gossypii (strain ATCC 10895 / CBS 109.51 / FGSC 9923 / NRRL Y-1056) (Yeast).